The sequence spans 174 residues: Co-chaperone protein HscB homolog (174 aa).

The 73-residue stretch at asparagine 2 to leucine 74 folds into the J domain.

This sequence belongs to the HscB family. Interacts with HscA and stimulates its ATPase activity.

Its function is as follows. Co-chaperone involved in the maturation of iron-sulfur cluster-containing proteins. Seems to help targeting proteins to be folded toward HscA. This is Co-chaperone protein HscB homolog from Shewanella amazonensis (strain ATCC BAA-1098 / SB2B).